A 1170-amino-acid chain; its full sequence is Integrin alpha-2 (1170 aa).

Residues 1 to 18 (PLQLVLVFSQGILNCCVA) form the signal peptide. The Extracellular portion of the chain corresponds to 19 to 1121 (YNVGLPKAKI…KPHEKVEVPT (1103 aa)). FG-GAP repeat units lie at residues 23-81 (LPKA…TTTC) and 90-150 (TSMS…LRTS). Cysteine 72 and cysteine 81 are joined by a disulfide. Residues asparagine 94, asparagine 101, and asparagine 332 are each glycosylated (N-linked (GlcNAc...) asparagine). The VWFA domain occupies 177–354 (WDAVKNFLEK…TIGEQIFSIE (178 aa)). FG-GAP repeat units follow at residues 355–409 (GTVQ…LIFS), 412–464 (AFEQ…ENGN), 466–528 (TVIQ…ILNW), 529–587 (HQFL…MIRL), and 591–653 (QKIL…FTPK). N-linked (GlcNAc...) asparagine glycans are attached at residues asparagine 421, asparagine 449, and asparagine 464. Residues 472 to 474 (RGD) carry the Cell attachment site motif. Ca(2+) is bound by residues aspartate 488, asparagine 490, aspartate 492, aspartate 496, aspartate 552, asparagine 554, aspartate 556, aspartate 560, aspartate 616, asparagine 618, aspartate 620, and aspartate 624. Cysteine 669 and cysteine 726 form a disulfide bridge. N-linked (GlcNAc...) asparagine glycans are attached at residues asparagine 688 and asparagine 748. 2 cysteine pairs are disulfide-bonded: cysteine 778-cysteine 784 and cysteine 854-cysteine 865. N-linked (GlcNAc...) asparagine glycosylation occurs at asparagine 945. Cystine bridges form between cysteine 1008–cysteine 1039 and cysteine 1044–cysteine 1049. Residues asparagine 1063 and asparagine 1070 are each glycosylated (N-linked (GlcNAc...) asparagine). Residues 1122–1143 (GVIVGSVIAGILLLLALVAILW) traverse the membrane as a helical segment. At 1144–1170 (KLGFFKRKYEKMAKNPDETDETTELNS) the chain is on the cytoplasmic side. Positions 1146 to 1150 (GFFKR) match the GFFKR motif motif.

The protein belongs to the integrin alpha chain family. In terms of assembly, heterodimer of an alpha and a beta subunit. Alpha-2 associates with beta-1. Interacts with HPS5 and RAB21.

Its subcellular location is the membrane. Integrin alpha-2/beta-1 is a receptor for laminin, collagen, collagen C-propeptides, fibronectin and E-cadherin. It recognizes the proline-hydroxylated sequence G-F-P-G-E-R in collagen. It is responsible for adhesion of platelets and other cells to collagens, modulation of collagen and collagenase gene expression, force generation and organization of newly synthesized extracellular matrix. The chain is Integrin alpha-2 (ITGA2) from Bos taurus (Bovine).